The primary structure comprises 306 residues: Lipoyl synthase 2 (306 aa).

Residues Cys-49, Cys-54, Cys-60, Cys-75, Cys-79, Cys-82, and Ser-300 each contribute to the [4Fe-4S] cluster site. The region spanning 61–289 (YAAGTATFLL…AEVACKLGFA (229 aa)) is the Radical SAM core domain.

This sequence belongs to the radical SAM superfamily. Lipoyl synthase family. Requires [4Fe-4S] cluster as cofactor.

It localises to the cytoplasm. It carries out the reaction [[Fe-S] cluster scaffold protein carrying a second [4Fe-4S](2+) cluster] + N(6)-octanoyl-L-lysyl-[protein] + 2 oxidized [2Fe-2S]-[ferredoxin] + 2 S-adenosyl-L-methionine + 4 H(+) = [[Fe-S] cluster scaffold protein] + N(6)-[(R)-dihydrolipoyl]-L-lysyl-[protein] + 4 Fe(3+) + 2 hydrogen sulfide + 2 5'-deoxyadenosine + 2 L-methionine + 2 reduced [2Fe-2S]-[ferredoxin]. It functions in the pathway protein modification; protein lipoylation via endogenous pathway; protein N(6)-(lipoyl)lysine from octanoyl-[acyl-carrier-protein]: step 2/2. Functionally, catalyzes the radical-mediated insertion of two sulfur atoms into the C-6 and C-8 positions of the octanoyl moiety bound to the lipoyl domains of lipoate-dependent enzymes, thereby converting the octanoylated domains into lipoylated derivatives. In Prochlorococcus marinus (strain MIT 9313), this protein is Lipoyl synthase 2.